The primary structure comprises 80 residues: MEARMFWLLVVLLALASSSSAGEYVGLSANQCAVPAKDRVDCGYPQVTPEQCNNRGCCFDSSIXGVPWCFKPLQETECTF.

An N-terminal signal peptide occupies residues 1–21 (MEARMFWLLVVLLALASSSSA). The 44-residue stretch at 30-73 (NQCAVPAKDRVDCGYPQVTPEQCNNRGCCFDSSIXGVPWCFKPL) folds into the P-type domain. 3 disulfides stabilise this stretch: cysteine 32-cysteine 58, cysteine 42-cysteine 57, and cysteine 52-cysteine 69.

In terms of assembly, monomer. Homodimer; disulfide-linked.

It localises to the secreted. Its subcellular location is the extracellular space. The protein resides in the extracellular matrix. It is found in the cytoplasm. Involved in the maintenance and repair of the intestinal mucosa. Promotes the mobility of epithelial cells in healing processes (motogen). The sequence is that of Trefoil factor 3 (TFF3) from Sus scrofa (Pig).